The chain runs to 191 residues: FMN-dependent NADH:quinone oxidoreductase 1 (191 aa).

FMN-binding positions include S10 and 16–18; that span reads SVS.

This sequence belongs to the azoreductase type 1 family. Homodimer. The cofactor is FMN.

The enzyme catalyses 2 a quinone + NADH + H(+) = 2 a 1,4-benzosemiquinone + NAD(+). It carries out the reaction N,N-dimethyl-1,4-phenylenediamine + anthranilate + 2 NAD(+) = 2-(4-dimethylaminophenyl)diazenylbenzoate + 2 NADH + 2 H(+). Functionally, quinone reductase that provides resistance to thiol-specific stress caused by electrophilic quinones. Also exhibits azoreductase activity. Catalyzes the reductive cleavage of the azo bond in aromatic azo compounds to the corresponding amines. This chain is FMN-dependent NADH:quinone oxidoreductase 1, found in Jannaschia sp. (strain CCS1).